Reading from the N-terminus, the 666-residue chain is Long-chain-fatty-acid--CoA ligase ACSBG2 (666 aa).

Residues 230–238 (TSGTTGIPK), 418–423 (ELYGLS), aspartate 496, and arginine 624 contribute to the ATP site.

This sequence belongs to the ATP-dependent AMP-binding enzyme family. Bubblegum subfamily. Testis-specific.

The protein resides in the cytoplasm. The protein localises to the membrane. The catalysed reaction is a long-chain fatty acid + ATP + CoA = a long-chain fatty acyl-CoA + AMP + diphosphate. It catalyses the reaction (5Z,8Z,11Z,14Z)-eicosatetraenoate + ATP + CoA = (5Z,8Z,11Z,14Z)-eicosatetraenoyl-CoA + AMP + diphosphate. It carries out the reaction hexadecanoate + ATP + CoA = hexadecanoyl-CoA + AMP + diphosphate. The enzyme catalyses (9Z)-octadecenoate + ATP + CoA = (9Z)-octadecenoyl-CoA + AMP + diphosphate. The catalysed reaction is (9Z,12Z)-octadecadienoate + ATP + CoA = (9Z,12Z)-octadecadienoyl-CoA + AMP + diphosphate. It catalyses the reaction tetracosanoate + ATP + CoA = tetracosanoyl-CoA + AMP + diphosphate. In terms of biological role, catalyzes the conversion of fatty acids such as long chain and very long-chain fatty acids to their active form acyl-CoAs for both synthesis of cellular lipids, and degradation via beta-oxidation. Can activate diverse saturated, monosaturated and polyunsaturated fatty acids. Has increased ability to activate oleic and linoleic acid. May play a role in spermatogenesis. The polypeptide is Long-chain-fatty-acid--CoA ligase ACSBG2 (Homo sapiens (Human)).